Here is a 60-residue protein sequence, read N- to C-terminus: ATP synthase subunit J, mitochondrial (60 aa).

A helical membrane pass occupies residues 13-32; sequence ILKPMLPFFLGGAIVFYGTV.

Belongs to the ATPase j subunit family. As to quaternary structure, F-type ATPases have 2 components, CF(1) - the catalytic core - and CF(0) - the membrane proton channel. In yeast, the dimeric form of ATP synthase consists of 17 polypeptides: alpha, beta, gamma, delta, epsilon, 4 (B), 5 (OSCP), 6 (A), 8, 9 (C), d, E (Tim11), f, g, h, i/j and k.

It is found in the mitochondrion membrane. Mitochondrial membrane ATP synthase (F(1)F(0) ATP synthase or Complex V) produces ATP from ADP in the presence of a proton gradient across the membrane which is generated by electron transport complexes of the respiratory chain. F-type ATPases consist of two structural domains, F(1) - containing the extramembraneous catalytic core and F(0) - containing the membrane proton channel, linked together by a central stalk and a peripheral stalk. During catalysis, ATP synthesis in the catalytic domain of F(1) is coupled via a rotary mechanism of the central stalk subunits to proton translocation. Part of the complex F(0) domain. Minor subunit located with subunit a in the membrane. The sequence is that of ATP synthase subunit J, mitochondrial (atp18) from Schizosaccharomyces pombe (strain 972 / ATCC 24843) (Fission yeast).